A 350-amino-acid chain; its full sequence is Hydroxymethylglutaryl-CoA synthase (350 aa).

Residue Glu83 is the Proton donor/acceptor of the active site. Catalysis depends on Cys115, which acts as the Acyl-thioester intermediate. Residues Cys115 and Thr156 each coordinate (3S)-3-hydroxy-3-methylglutaryl-CoA. Arg204 serves as a coordination point for CoA. (3S)-3-hydroxy-3-methylglutaryl-CoA contacts are provided by Thr206 and His239. His239 (proton donor/acceptor) is an active-site residue. Lys244 is a CoA binding site. 2 residues coordinate (3S)-3-hydroxy-3-methylglutaryl-CoA: Asn271 and Ser301.

This sequence belongs to the thiolase-like superfamily. Archaeal HMG-CoA synthase family. In terms of assembly, interacts with acetoacetyl-CoA thiolase that catalyzes the precedent step in the pathway and with a DUF35 protein. The acetoacetyl-CoA thiolase/HMG-CoA synthase complex channels the intermediate via a fused CoA-binding site, which allows for efficient coupling of the endergonic thiolase reaction with the exergonic HMGCS reaction.

It carries out the reaction acetoacetyl-CoA + acetyl-CoA + H2O = (3S)-3-hydroxy-3-methylglutaryl-CoA + CoA + H(+). The protein operates within metabolic intermediate biosynthesis; (R)-mevalonate biosynthesis; (R)-mevalonate from acetyl-CoA: step 2/3. In terms of biological role, catalyzes the condensation of acetyl-CoA with acetoacetyl-CoA to form 3-hydroxy-3-methylglutaryl-CoA (HMG-CoA). Functions in the mevalonate (MVA) pathway leading to isopentenyl diphosphate (IPP), a key precursor for the biosynthesis of isoprenoid compounds that are building blocks of archaeal membrane lipids. This Thermococcus kodakarensis (strain ATCC BAA-918 / JCM 12380 / KOD1) (Pyrococcus kodakaraensis (strain KOD1)) protein is Hydroxymethylglutaryl-CoA synthase.